Here is a 451-residue protein sequence, read N- to C-terminus: tRNA-2-methylthio-N(6)-dimethylallyladenosine synthase (451 aa).

The MTTase N-terminal domain occupies 3 to 120 (KKLFIQTHGC…LPEMVNAAGK (118 aa)). Residues cysteine 12, cysteine 49, cysteine 83, cysteine 156, cysteine 160, and cysteine 163 each coordinate [4Fe-4S] cluster. Residues 142 to 374 (RVEGAEAFVS…QRRISQQAYD (233 aa)) form the Radical SAM core domain. One can recognise a TRAM domain in the interval 377 to 441 (LSMVGEVQRI…PNSLLGELVG (65 aa)).

This sequence belongs to the methylthiotransferase family. MiaB subfamily. Monomer. Requires [4Fe-4S] cluster as cofactor.

Its subcellular location is the cytoplasm. The enzyme catalyses N(6)-dimethylallyladenosine(37) in tRNA + (sulfur carrier)-SH + AH2 + 2 S-adenosyl-L-methionine = 2-methylsulfanyl-N(6)-dimethylallyladenosine(37) in tRNA + (sulfur carrier)-H + 5'-deoxyadenosine + L-methionine + A + S-adenosyl-L-homocysteine + 2 H(+). Its function is as follows. Catalyzes the methylthiolation of N6-(dimethylallyl)adenosine (i(6)A), leading to the formation of 2-methylthio-N6-(dimethylallyl)adenosine (ms(2)i(6)A) at position 37 in tRNAs that read codons beginning with uridine. This chain is tRNA-2-methylthio-N(6)-dimethylallyladenosine synthase, found in Marinomonas sp. (strain MWYL1).